An 865-amino-acid chain; its full sequence is Aconitate hydratase B (865 aa).

Residues Arg191, 244–246 (SSR), 414–416 (QDT), and Ser498 contribute to the substrate site. Positions 710, 769, and 772 each coordinate [4Fe-4S] cluster. The substrate site is built by Arg791 and Arg796.

The protein belongs to the aconitase/IPM isomerase family. Monomer. [4Fe-4S] cluster serves as cofactor.

The enzyme catalyses citrate = D-threo-isocitrate. It catalyses the reaction (2S,3R)-3-hydroxybutane-1,2,3-tricarboxylate = 2-methyl-cis-aconitate + H2O. It functions in the pathway carbohydrate metabolism; tricarboxylic acid cycle; isocitrate from oxaloacetate: step 2/2. Its pathway is organic acid metabolism; propanoate degradation. Its function is as follows. Involved in the catabolism of short chain fatty acids (SCFA) via the tricarboxylic acid (TCA)(acetyl degradation route) and the 2-methylcitrate cycle I (propionate degradation route). Catalyzes the reversible isomerization of citrate to isocitrate via cis-aconitate. Also catalyzes the hydration of 2-methyl-cis-aconitate to yield (2R,3S)-2-methylisocitrate. The apo form of AcnB functions as a RNA-binding regulatory protein which regulates FliC synthesis via interaction with the ftsH transcript to decrease the intracellular levels of FtsH. The lower levels of FtsH protease activity then influence sigma-32, DnaK and ultimately FliC production. This Salmonella typhimurium (strain LT2 / SGSC1412 / ATCC 700720) protein is Aconitate hydratase B (acnB).